Here is a 257-residue protein sequence, read N- to C-terminus: Phosphate import ATP-binding protein PstB (257 aa).

Positions 4–252 (LKLNDVNIYY…PDNKETEDYI (249 aa)) constitute an ABC transporter domain. 36–43 (GPSGCGKS) contributes to the ATP binding site.

It belongs to the ABC transporter superfamily. Phosphate importer (TC 3.A.1.7) family. The complex is composed of two ATP-binding proteins (PstB), two transmembrane proteins (PstC and PstA) and a solute-binding protein (PstS).

It localises to the cell membrane. The enzyme catalyses phosphate(out) + ATP + H2O = ADP + 2 phosphate(in) + H(+). Its function is as follows. Part of the ABC transporter complex PstSACB involved in phosphate import. Responsible for energy coupling to the transport system. This Corynebacterium efficiens (strain DSM 44549 / YS-314 / AJ 12310 / JCM 11189 / NBRC 100395) protein is Phosphate import ATP-binding protein PstB.